The following is a 29-amino-acid chain: Cyclotide cter-K (29 aa).

The cyclopeptide (His-Asn) cross-link spans 1 to 29 (HEPCGESCVFIPCITTVVGCSCKNKVCYN). Cystine bridges form between Cys-4–Cys-20, Cys-8–Cys-22, and Cys-13–Cys-27.

Contains 3 disulfide bonds. Post-translationally, this is a cyclic peptide.

Probably participates in a plant defense mechanism. The sequence is that of Cyclotide cter-K from Clitoria ternatea (Butterfly pea).